The primary structure comprises 95 residues: Aspartyl/glutamyl-tRNA(Asn/Gln) amidotransferase subunit C (95 aa).

It belongs to the GatC family. Heterotrimer of A, B and C subunits.

The catalysed reaction is L-glutamyl-tRNA(Gln) + L-glutamine + ATP + H2O = L-glutaminyl-tRNA(Gln) + L-glutamate + ADP + phosphate + H(+). It catalyses the reaction L-aspartyl-tRNA(Asn) + L-glutamine + ATP + H2O = L-asparaginyl-tRNA(Asn) + L-glutamate + ADP + phosphate + 2 H(+). In terms of biological role, allows the formation of correctly charged Asn-tRNA(Asn) or Gln-tRNA(Gln) through the transamidation of misacylated Asp-tRNA(Asn) or Glu-tRNA(Gln) in organisms which lack either or both of asparaginyl-tRNA or glutaminyl-tRNA synthetases. The reaction takes place in the presence of glutamine and ATP through an activated phospho-Asp-tRNA(Asn) or phospho-Glu-tRNA(Gln). This chain is Aspartyl/glutamyl-tRNA(Asn/Gln) amidotransferase subunit C, found in Rhodopseudomonas palustris (strain TIE-1).